Consider the following 391-residue polypeptide: Salivary protein TRIO (391 aa).

An N-terminal signal peptide occupies residues 1–24; the sequence is MCRGLSAVLILLVSLSAQLHVVVG. Asparagine 323 is a glycosylation site (N-linked (GlcNAc...) asparagine).

In terms of tissue distribution, female salivary gland (at protein level). Female saliva (at protein level). Not detected in female midgut, head and carcass (at protein level). Not detected in male tissues (at protein level).

Its subcellular location is the secreted. Functionally, required for efficient probing on a mammalian host. Alters the local inflammatory response in the host skin following a mosquito bite by suppressing TNF-alpha/TNF expression. (Microbial infection) Contributes to optimal transmission of Plasmodium berghei sporozoites to mice. In terms of biological role, (Microbial infection) Contributes to optimal transmission of Plasmodium falciparum sporozoites to mammalian host. This chain is Salivary protein TRIO, found in Anopheles gambiae (African malaria mosquito).